A 448-amino-acid chain; its full sequence is MNLNQIHNVYFIGIGGIGMSALARYFKFIGKNVSGYDKTPSILTSELIESGIAIHFEDNIDLIPKDYFVENTLVIITPAVPKSHSEWNYFLEREYHVKKRAEVLGIITKDTFCLAVAGTHGKTTTSSILGHILYESGADVTAFIGGIVENYNSNLIGSGKTVTVVEADEFDRSFLHLYPNIACVTSMDADHLDIYGDDAAIKASFKEFADKVEDKNKLFVINGLPLKGITVGANDDSQFVAHNIRIENGWYIFDVKTPTENIKDLKFGLPGKHNLTNALLALAMARTFGTPTESIAKALASFKGVKRRFSFQIRKPKFVYIDDYAHHPTEINAVHQAVRELYPNEKVLAVFQPHLFSRTKDFANDFAKSLSQFDEILLLDIYPARELPIEGINSGWLLDKVENKNKKLVHKNELIPLLKKSDATVIVTIGAGDIGEMVVNIKKELDEK.

118–124 (GTHGKTT) provides a ligand contact to ATP.

Belongs to the MurCDEF family.

It localises to the cytoplasm. The enzyme catalyses UDP-N-acetyl-alpha-D-muramate + L-alanine + ATP = UDP-N-acetyl-alpha-D-muramoyl-L-alanine + ADP + phosphate + H(+). The protein operates within cell wall biogenesis; peptidoglycan biosynthesis. Functionally, cell wall formation. The chain is UDP-N-acetylmuramate--L-alanine ligase from Flavobacterium psychrophilum (strain ATCC 49511 / DSM 21280 / CIP 103535 / JIP02/86).